We begin with the raw amino-acid sequence, 344 residues long: Prickle-like protein 4 (344 aa).

A PET domain is found at 1-81 (MSPQGPAVLS…ARLVLPKLEG (81 aa)). LIM zinc-binding domains lie at 82 to 147 (HTCE…LLRP) and 148 to 207 (RCPA…RYSD). Residues 253–344 (GSSLQTQRGL…NASKTHCTMC (92 aa)) are disordered. Residues 257–271 (QTQRGLPGSSPQQEN) are compositionally biased toward polar residues. The segment covering 272–296 (RPGDKAEAPKGQEQCRLETIRDPKD) has biased composition (basic and acidic residues). The segment covering 322–344 (SWKTPGSLQAEDSNASKTHCTMC) has biased composition (polar residues).

Belongs to the prickle / espinas / testin family. Expressed in a broad range of normal tissues as well as in hepatocellular carcinoma, breast cancer and prostate cancer tissues.

In Homo sapiens (Human), this protein is Prickle-like protein 4 (PRICKLE4).